A 365-amino-acid polypeptide reads, in one-letter code: 2'-hydroxybiphenyl-2-sulfinate desulfinase (365 aa).

C27 is a catalytic residue. Residues C27, H60, and R70 each contribute to the 2'-hydroxybiphenyl-2-sulfinate site. The active site involves R70.

The protein belongs to the DszB desulfinase family. In terms of assembly, monomer.

It is found in the cytoplasm. The enzyme catalyses 2'-hydroxybiphenyl-2-sulfinate + H2O = biphenyl-2-ol + sulfite + H(+). Its pathway is sulfur metabolism; dibenzothiophene degradation. Its function is as follows. Catalyzes the third and final step of the '4S' desulfurization pathway that removes covalently bound sulfur from dibenzothiophene (DBT) without breaking carbon-carbon bonds. Oxidizes 2-(2'-hydroxyphenyl)benzene sulphinate (HBPS) to 2-hydroxybiphenyl (HBP) plus sulfite. The rate-limiting step of the '4S' desulfurization pathway. The sequence is that of 2'-hydroxybiphenyl-2-sulfinate desulfinase from Rhodococcus erythropolis (Arthrobacter picolinophilus).